A 329-amino-acid chain; its full sequence is Mitochondrial glycine transporter (329 aa).

3 Solcar repeats span residues 19–103 (SKTT…LRQP), 130–214 (LSNW…LKRH), and 232–316 (SSSS…LILR). 6 consecutive transmembrane segments (helical) span residues 25 to 50 (FAAGLCSGLTSSILLQPADLLKTRVQ), 78 to 104 (GTLPSALRTGFGSALYFTTLNALRQPL), 136 to 161 (LGTGAVARVAAGFVMMPVTVIKVRYE), 189 to 212 (GFGATAARDAPYAGLYVLFYEQLK), 236 to 262 (INFISGGLAAGLATTITNPFDAVKTRL), and 291 to 309 (GLGLRITRKALSSALAWTV).

The protein belongs to the mitochondrial carrier (TC 2.A.29) family. SLC25A38 subfamily.

It localises to the mitochondrion inner membrane. It catalyses the reaction glycine(in) = glycine(out). Functionally, mitochondrial glycine transporter that imports glycine into the mitochondrial matrix. Plays an important role in providing glycine for the first enzymatic step in heme biosynthesis, the condensation of glycine with succinyl-CoA to produce 5-aminolevulinate (ALA) in the mitochondrial matrix. This is Mitochondrial glycine transporter from Aspergillus terreus (strain NIH 2624 / FGSC A1156).